We begin with the raw amino-acid sequence, 102 residues long: Small ribosomal subunit protein uS10 (102 aa).

It belongs to the universal ribosomal protein uS10 family. As to quaternary structure, part of the 30S ribosomal subunit.

Functionally, involved in the binding of tRNA to the ribosomes. The sequence is that of Small ribosomal subunit protein uS10 from Methylocella silvestris (strain DSM 15510 / CIP 108128 / LMG 27833 / NCIMB 13906 / BL2).